We begin with the raw amino-acid sequence, 338 residues long: tRNA (cytosine(34)-C(5))-methyltransferase, mitochondrial (338 aa).

S-adenosyl-L-methionine is bound by residues 140-146 (CAAPGGK), Glu-163, Asp-194, and Asp-212. The active-site Nucleophile is the Cys-266.

It belongs to the class I-like SAM-binding methyltransferase superfamily. RsmB/NOP family.

It localises to the mitochondrion matrix. The catalysed reaction is cytidine(34) in mitochondrial tRNA + S-adenosyl-L-methionine = 5-methylcytidine(34) in mitochondrial tRNA + S-adenosyl-L-homocysteine + H(+). Functionally, mitochondrial tRNA methyltransferase that mediates methylation of cytosine to 5-methylcytosine (m5C) at position 34 of mt-tRNA(Met). mt-tRNA(Met) methylation at cytosine(34) takes place at the wobble position of the anticodon and initiates the formation of 5-formylcytosine (f(5)c) at this position. mt-tRNA(Met) containing the f(5)c modification at the wobble position enables recognition of the AUA codon in addition to the AUG codon, expanding codon recognition in mitochondrial translation. The protein is tRNA (cytosine(34)-C(5))-methyltransferase, mitochondrial of Bos taurus (Bovine).